A 172-amino-acid polypeptide reads, in one-letter code: Large ribosomal subunit protein uL10 (172 aa).

The protein belongs to the universal ribosomal protein uL10 family. Part of the ribosomal stalk of the 50S ribosomal subunit. The N-terminus interacts with L11 and the large rRNA to form the base of the stalk. The C-terminus forms an elongated spine to which L12 dimers bind in a sequential fashion forming a multimeric L10(L12)X complex.

Its function is as follows. Forms part of the ribosomal stalk, playing a central role in the interaction of the ribosome with GTP-bound translation factors. The polypeptide is Large ribosomal subunit protein uL10 (Francisella tularensis subsp. tularensis (strain FSC 198)).